The following is a 207-amino-acid chain: Uracil phosphoribosyltransferase (207 aa).

5-phospho-alpha-D-ribose 1-diphosphate is bound by residues R77, R102, and 129–137; that span reads DPMLATGGS. Uracil-binding positions include I192 and 197 to 199; that span reads GDA. D198 lines the 5-phospho-alpha-D-ribose 1-diphosphate pocket.

The protein belongs to the UPRTase family. Mg(2+) serves as cofactor.

It carries out the reaction UMP + diphosphate = 5-phospho-alpha-D-ribose 1-diphosphate + uracil. Its pathway is pyrimidine metabolism; UMP biosynthesis via salvage pathway; UMP from uracil: step 1/1. With respect to regulation, allosterically activated by GTP. In terms of biological role, catalyzes the conversion of uracil and 5-phospho-alpha-D-ribose 1-diphosphate (PRPP) to UMP and diphosphate. This Ureaplasma parvum serovar 3 (strain ATCC 27815 / 27 / NCTC 11736) protein is Uracil phosphoribosyltransferase.